The primary structure comprises 771 residues: Solute carrier family 7 member 14 (771 aa).

The next 6 helical transmembrane spans lie at 58–78 (LISL…SGLV), 83–103 (AGPG…LSGV), 119–141 (AYTY…NLIL), 187–207 (YPDL…ALGV), 216–236 (VLNV…LFFI), and 251–271 (WSGV…FDII). Asparagine 282 is a glycosylation site (N-linked (GlcNAc...) asparagine). A run of 5 helical transmembrane segments spans residues 291–311 (ASLV…TLMV), 336–356 (FVVA…SLFP), 360–380 (VIYA…VSSY), 384–404 (PVVA…LVSL), and 407–427 (LIEM…VCVL). Phosphoserine is present on residues serine 465, serine 468, and serine 488. 4 helical membrane-spanning segments follow: residues 565–585 (VTIC…FIIF), 596–616 (WAIL…FVIL), 628–648 (MAPC…YLML), and 655–675 (WIRF…YGIW). Asparagine 676 carries an N-linked (GlcNAc...) asparagine glycan. The disordered stretch occupies residues 736 to 771 (DAKANGRTSSKAKSKSKHKQNSEALIANDELDYSPE). Basic residues predominate over residues 745–754 (SKAKSKSKHK). Serine 757 and serine 769 each carry phosphoserine.

Belongs to the amino acid-polyamine-organocation (APC) superfamily. Cationic amino acid transporter (CAT) (TC 2.A.3.3) family. Expressed in skin fibroblasts.

Its subcellular location is the lysosome membrane. It carries out the reaction 4-aminobutanoate(in) = 4-aminobutanoate(out). Imports 4-aminobutanoate (GABA) into lysosomes. May act as a GABA sensor that regulates mTORC2-dependent INS signaling and gluconeogenesis. The transport mechanism and substrate selectivity remain to be elucidated. This chain is Solute carrier family 7 member 14, found in Homo sapiens (Human).